A 294-amino-acid polypeptide reads, in one-letter code: Nucleotide-binding protein CPF_0343 (294 aa).

8–15 (GLSGAGKT) lines the ATP pocket. Position 59–62 (59–62 (DIRG)) interacts with GTP.

The protein belongs to the RapZ-like family.

Its function is as follows. Displays ATPase and GTPase activities. This chain is Nucleotide-binding protein CPF_0343, found in Clostridium perfringens (strain ATCC 13124 / DSM 756 / JCM 1290 / NCIMB 6125 / NCTC 8237 / Type A).